A 504-amino-acid chain; its full sequence is MDKFQGYLEFDGVRQQSFLYPLFFREYIYVLAYDHGLNRLNRNRSIFLENTDYDKKYSSLIVKRLILRMYEQNRLIIPTKDLNQNSFLGHTSLFYYQMISVLFAVIVEIPFSLRLGSSFQGKQLKKSYNLQSIHSIFPFLEDKLAHFNYVLDVLIPYPIHLEILVQTLRYRVKDASSLHXFRFCLYEYCNWKNFYKKKKPILNPRFFLFLYNSHVCEYESIFFFLRKRSSHLRSTSYEVLFERILFYGKIQHFLKVFVNNFPAILGLLKDPFIHYVRYHGRCILATKDTPLLMNKWKYYFVNLWQCYFSVWFQSHKVNINKLSKDNLEFLGYLSSLRLNPLVVRSQMLENSFLIDNVRIKLDSKIPISSIIGSLAKDKFCNVLGHPISKATWTDSSDSDILNRFVRICRNISHYYSGSSKKKNLYRIKYILRLCCVKTLARKHKSTVRAFLKRLGSGLLEEFLTGEDQVLSLIFPRSYYASKRLYRVRIWYLDILYLNDLVNHE.

Belongs to the intron maturase 2 family. MatK subfamily.

It is found in the plastid. Its subcellular location is the chloroplast. Its function is as follows. Usually encoded in the trnK tRNA gene intron. Probably assists in splicing its own and other chloroplast group II introns. This Turritis glabra (Tower mustard) protein is Maturase K.